Here is a 248-residue protein sequence, read N- to C-terminus: Homeotic protein ultrabithorax (248 aa).

The segment covering 116–125 (GTGGGGGGSA) has biased composition (gly residues). Positions 116 to 191 (GTGGGGGGSA…GSAGVVGGAG (76 aa)) are disordered. A compositionally biased stretch (low complexity) spans 126–139 (GSANGANNTANGQN). 2 stretches are compositionally biased toward gly residues: residues 140 to 152 (TSGG…GGGM) and 182 to 191 (GSAGVVGGAG). The Antp-type hexapeptide motif lies at 241–246 (FYPWMA).

This sequence belongs to the Antp homeobox family.

Its subcellular location is the nucleus. In terms of biological role, sequence-specific transcription factor which is part of a developmental regulatory system that provides cells with specific positional identities on the anterior-posterior axis. Binds the consensus region 5'-TTAAT[GT][GA]-3'. The polypeptide is Homeotic protein ultrabithorax (Ubx) (Musca domestica (House fly)).